The following is a 313-amino-acid chain: Ribonuclease HIII (313 aa).

The segment at 62 to 88 (AERWTADAETPAPKKPASKKSIPSVYQ) is disordered. Residues 96-312 (MSVIGSDEVG…TQKAKRIASK (217 aa)) enclose the RNase H type-2 domain. The a divalent metal cation site is built by aspartate 102, glutamate 103, and aspartate 207.

The protein belongs to the RNase HII family. RnhC subfamily. Mn(2+) serves as cofactor. Requires Mg(2+) as cofactor.

It is found in the cytoplasm. It catalyses the reaction Endonucleolytic cleavage to 5'-phosphomonoester.. Endonuclease that specifically degrades the RNA of RNA-DNA hybrids. In Bacillus licheniformis (strain ATCC 14580 / DSM 13 / JCM 2505 / CCUG 7422 / NBRC 12200 / NCIMB 9375 / NCTC 10341 / NRRL NRS-1264 / Gibson 46), this protein is Ribonuclease HIII.